We begin with the raw amino-acid sequence, 211 residues long: Superoxide dismutase [Cu-Zn], chloroplastic (211 aa).

A chloroplast-targeting transit peptide spans 1-57 (MQAILAAAMAAQTLLFSATAPPASLFQSPSSARPFHSLRLAAGPAGAAAARALVVAD). The Cu cation site is built by His-103, His-105, and His-120. The cysteines at positions 114 and 203 are disulfide-linked. Zn(2+) contacts are provided by His-120, His-128, His-137, and Asp-140. His-177 contacts Cu cation.

The protein belongs to the Cu-Zn superoxide dismutase family. In terms of assembly, homotetramer. Cu cation serves as cofactor. Zn(2+) is required as a cofactor.

Its subcellular location is the plastid. The protein resides in the chloroplast. The enzyme catalyses 2 superoxide + 2 H(+) = H2O2 + O2. Destroys radicals which are normally produced within the cells and which are toxic to biological systems. The protein is Superoxide dismutase [Cu-Zn], chloroplastic (SODCP) of Oryza sativa subsp. japonica (Rice).